We begin with the raw amino-acid sequence, 855 residues long: DNA mismatch repair protein MutS (855 aa).

618–625 (GPNMGGKS) is an ATP binding site.

This sequence belongs to the DNA mismatch repair MutS family.

Its function is as follows. This protein is involved in the repair of mismatches in DNA. It is possible that it carries out the mismatch recognition step. This protein has a weak ATPase activity. The protein is DNA mismatch repair protein MutS of Shewanella loihica (strain ATCC BAA-1088 / PV-4).